Here is a 571-residue protein sequence, read N- to C-terminus: Cyclic di-GMP phosphodiesterase TpdA (571 aa).

3 helical membrane passes run 155 to 175 (IAWVLLVTTAIFFSVCYYAIN), 321 to 341 (VYYISGPLKSIILLSLFFLVI), and 395 to 415 (TLISNGLLLIHTILVIRAIYA). The EAL domain occupies 344–571 (HRSLQAFITY…HQGYFYPLHF (228 aa)).

The protein resides in the cell inner membrane. It carries out the reaction 3',3'-c-di-GMP + H2O = 5'-phosphoguanylyl(3'-&gt;5')guanosine + H(+). In terms of biological role, cyclic di-GMP phosphodiesterase that plays an important role in modulating the global c-di-GMP pool. Its ability to alter the c-di-GMP pool has an effect on swimming motility, swarming motility and biofilm formation, multicellular behaviors that are important for the survival and dissemination of this environmental pathogen. Exhibits a dual function, namely, c-di-GMP degradation and modulation of its own expression. The sequence is that of Cyclic di-GMP phosphodiesterase TpdA from Vibrio parahaemolyticus serotype O3:K6 (strain RIMD 2210633).